A 292-amino-acid chain; its full sequence is Golgi to ER traffic protein 2 (292 aa).

Residues 1–18 (MSELSAEEKRKLLRERRQ) show a composition bias toward basic and acidic residues. The segment at 1 to 80 (MSELSAEEKR…TPLHDDPEVP (80 aa)) is disordered. The Cytoplasmic segment spans residues 1–158 (MSELSAEEKR…SQYHAYEQKQ (158 aa)). Polar residues-rich tracts occupy residues 29–47 (RLNN…NVTS) and 55–71 (ATTT…QSPT). A helical membrane pass occupies residues 159-179 (WKARFLVVRWIIHTLNFVYHY). The Lumenal segment spans residues 180–205 (IASGYKLSASPYAFVRAQAVDSHVRT). The chain crosses the membrane as a helical span at residues 206 to 225 (FFTAFLTVEVAVISAYFLVM). The Cytoplasmic segment spans residues 226–268 (SQPKFKDFSRENLVSRILSMASAVVPAVGRYQPLVTRALVYWN). Residues 269–289 (GASIFVGDLMLMVFYFGITSV) form a helical membrane-spanning segment. Residues 290 to 292 (LGN) lie on the Lumenal side of the membrane.

Belongs to the GET2 family. As to quaternary structure, component of the Golgi to ER traffic (GET) complex, which is composed of GET1, GET2 and GET3. Within the complex, GET1 and GET2 form a heterotetramer which is stabilized by phosphatidylinositol binding and which binds to the GET3 homodimer.

Its subcellular location is the endoplasmic reticulum membrane. The protein localises to the golgi apparatus membrane. Required for the post-translational delivery of tail-anchored (TA) proteins to the endoplasmic reticulum. Together with GET1, acts as a membrane receptor for soluble GET3, which recognizes and selectively binds the transmembrane domain of TA proteins in the cytosol. The GET complex cooperates with the HDEL receptor ERD2 to mediate the ATP-dependent retrieval of resident ER proteins that contain a C-terminal H-D-E-L retention signal from the Golgi to the ER. The sequence is that of Golgi to ER traffic protein 2 from Clavispora lusitaniae (strain ATCC 42720) (Yeast).